We begin with the raw amino-acid sequence, 69 residues long: DNA gyrase inhibitor YacG (69 aa).

Zn(2+)-binding residues include Cys12, Cys15, Cys31, and Cys35. The segment at 49-69 (RVPVEPKPDEGETPDQAERPQ) is disordered.

Belongs to the DNA gyrase inhibitor YacG family. Interacts with GyrB. The cofactor is Zn(2+).

Its function is as follows. Inhibits all the catalytic activities of DNA gyrase by preventing its interaction with DNA. Acts by binding directly to the C-terminal domain of GyrB, which probably disrupts DNA binding by the gyrase. This is DNA gyrase inhibitor YacG from Thiobacillus denitrificans (strain ATCC 25259 / T1).